The primary structure comprises 98 residues: Tan_12Cys (98 aa).

A signal peptide spans 1-21 (MNLKVLFLLAMVLVTLCLGED). A propeptide spanning residues 22–28 (RVTDRRK) is cleaved from the precursor.

This sequence belongs to the teretoxin C (TC) superfamily. Contains 6 disulfide bonds. As to expression, expressed by the venom duct.

It localises to the secreted. This is Tan_12Cys from Terebra anilis (Auger snail).